The chain runs to 181 residues: Probable Brix domain-containing ribosomal biogenesis protein (181 aa).

The Brix domain maps to 5-181 (CKVIITTSRE…RIKKVVYRHV (177 aa)).

Its function is as follows. Probably involved in the biogenesis of the ribosome. The chain is Probable Brix domain-containing ribosomal biogenesis protein from Pyrobaculum aerophilum (strain ATCC 51768 / DSM 7523 / JCM 9630 / CIP 104966 / NBRC 100827 / IM2).